A 613-amino-acid chain; its full sequence is V-type proton ATPase catalytic subunit A isoform 1 (613 aa).

240–247 (GAFGCGKT) lines the ATP pocket.

It belongs to the ATPase alpha/beta chains family. As to quaternary structure, V-ATPase is a heteromultimeric enzyme composed of a peripheral catalytic V1 complex (main components: subunits A, B, C, D, E, and F) attached to an integral membrane V0 proton pore complex (main component: the proteolipid protein).

The enzyme catalyses ATP + H2O + 4 H(+)(in) = ADP + phosphate + 5 H(+)(out). Functionally, catalytic subunit of the peripheral V1 complex of vacuolar ATPase. V-ATPase vacuolar ATPase is responsible for acidifying a variety of intracellular compartments in eukaryotic cells. The sequence is that of V-type proton ATPase catalytic subunit A isoform 1 from Acetabularia acetabulum (Mermaid's wine glass).